A 477-amino-acid chain; its full sequence is Methylenetetrahydrofolate--tRNA-(uracil-5-)-methyltransferase TrmFO (477 aa).

14 to 19 serves as a coordination point for FAD; the sequence is GGGLAG.

This sequence belongs to the MnmG family. TrmFO subfamily. FAD is required as a cofactor.

The protein resides in the cytoplasm. It catalyses the reaction uridine(54) in tRNA + (6R)-5,10-methylene-5,6,7,8-tetrahydrofolate + NADH + H(+) = 5-methyluridine(54) in tRNA + (6S)-5,6,7,8-tetrahydrofolate + NAD(+). The enzyme catalyses uridine(54) in tRNA + (6R)-5,10-methylene-5,6,7,8-tetrahydrofolate + NADPH + H(+) = 5-methyluridine(54) in tRNA + (6S)-5,6,7,8-tetrahydrofolate + NADP(+). In terms of biological role, catalyzes the folate-dependent formation of 5-methyl-uridine at position 54 (M-5-U54) in all tRNAs. This Rhizobium johnstonii (strain DSM 114642 / LMG 32736 / 3841) (Rhizobium leguminosarum bv. viciae) protein is Methylenetetrahydrofolate--tRNA-(uracil-5-)-methyltransferase TrmFO.